We begin with the raw amino-acid sequence, 336 residues long: MNYKDAGVNIDEGNKLVKMIKPIAKTTLTANVLEGIGGFAGLFEIKNYKNPVLISSTDGVGTKLKIAFMMDKHDTVGIDLVAMCVNDVIVTGAKPLFFLDYFATGKLKSETAVEVIKGIAEGCKIAGCALIGGETAELPGFYKEGEYDLAGFCVGIVEKEELIDTKSIKKGDAIIGLASSGIHSNGYSLVRKVFFEKNNFSVKDFIPELGMNLGDALLTPTKIYVKSIEALKELKIKGMAHITGGGFIDNIPRILRKSIAAKINKGSWKIPTIFNLIQRLGDIEEREMYRTFNMGIGMVVIVDPSDVDKALEKLNGIGEKAYVIGEIVESEGGVIL.

The protein belongs to the AIR synthase family.

Its subcellular location is the cytoplasm. The enzyme catalyses 2-formamido-N(1)-(5-O-phospho-beta-D-ribosyl)acetamidine + ATP = 5-amino-1-(5-phospho-beta-D-ribosyl)imidazole + ADP + phosphate + H(+). The protein operates within purine metabolism; IMP biosynthesis via de novo pathway; 5-amino-1-(5-phospho-D-ribosyl)imidazole from N(2)-formyl-N(1)-(5-phospho-D-ribosyl)glycinamide: step 2/2. In Thermoanaerobacter sp. (strain X514), this protein is Phosphoribosylformylglycinamidine cyclo-ligase.